The primary structure comprises 119 residues: Large ribosomal subunit protein uL22 (119 aa).

Belongs to the universal ribosomal protein uL22 family. As to quaternary structure, part of the 50S ribosomal subunit.

In terms of biological role, this protein binds specifically to 23S rRNA; its binding is stimulated by other ribosomal proteins, e.g. L4, L17, and L20. It is important during the early stages of 50S assembly. It makes multiple contacts with different domains of the 23S rRNA in the assembled 50S subunit and ribosome. The globular domain of the protein is located near the polypeptide exit tunnel on the outside of the subunit, while an extended beta-hairpin is found that lines the wall of the exit tunnel in the center of the 70S ribosome. The polypeptide is Large ribosomal subunit protein uL22 (Rhodopirellula baltica (strain DSM 10527 / NCIMB 13988 / SH1)).